The primary structure comprises 222 residues: MARVKRAVNAHKKRRVVLERAKGYRGQRSRLYRKAKEQLLHSFVYSYGDRRKKKGDFRRLWIQRINAASRANGLTYNRLIQGLKAAEVEVDRRMLAELAVSDANAFAALVNIAKAALPADTSAPAAAAAPKAAKVAPAAATATAVKAVVSEKPAIDGAVAADGDEAPEGYAIKGNAESKKYHVPGSTWYNTTAAEYWFSTVEAAKAAGFEPAGGEARQQIKN.

It belongs to the bacterial ribosomal protein bL20 family.

Binds directly to 23S ribosomal RNA and is necessary for the in vitro assembly process of the 50S ribosomal subunit. It is not involved in the protein synthesizing functions of that subunit. The sequence is that of Large ribosomal subunit protein bL20 (rplT) from Paenarthrobacter aurescens (strain TC1).